A 194-amino-acid polypeptide reads, in one-letter code: Fe/S biogenesis protein NfuA (194 aa).

[4Fe-4S] cluster-binding residues include C152 and C155.

This sequence belongs to the NfuA family. In terms of assembly, homodimer. [4Fe-4S] cluster serves as cofactor.

In terms of biological role, involved in iron-sulfur cluster biogenesis. Binds a 4Fe-4S cluster, can transfer this cluster to apoproteins, and thereby intervenes in the maturation of Fe/S proteins. Could also act as a scaffold/chaperone for damaged Fe/S proteins. This Ectopseudomonas mendocina (strain ymp) (Pseudomonas mendocina) protein is Fe/S biogenesis protein NfuA.